Consider the following 414-residue polypeptide: Serpin A12 (414 aa).

The first 20 residues, 1-20, serve as a signal peptide directing secretion; sequence MNPTLGLAIFLAVLLTVKGL. Asn221 and Asn233 each carry an N-linked (GlcNAc...) (complex) asparagine glycan. Asn267 is a glycosylation site (N-linked (GlcNAc...) (high mannose) asparagine). The tract at residues 364–382 is reactive center loop; sequence GTEGAAGTGAQTLPMETPL.

Belongs to the serpin family. In terms of assembly, forms a stable complex with KLK7. In terms of processing, glycosylation slightly decreases affinity for heparin, but otherwise has no significant effect on KLK7 inhibitory activity or thermal stability of the protein. Expressed in visceral adipose tissues.

Its subcellular location is the secreted. With respect to regulation, inhibition of KLK7 is enhanced by heparin. Its function is as follows. Adipokine that modulates insulin action by specifically inhibiting its target protease KLK7 in white adipose tissues. In Homo sapiens (Human), this protein is Serpin A12 (SERPINA12).